The chain runs to 223 residues: Large ribosomal subunit protein bL21 (223 aa).

A disordered region spans residues 110–149 (TALKSTTAEPKAADAPKAKAKAAPKAEKAAAPKAEKAPAK). The segment covering 133-147 (PKAEKAAAPKAEKAP) has biased composition (basic and acidic residues).

This sequence belongs to the bacterial ribosomal protein bL21 family. Part of the 50S ribosomal subunit. Contacts protein L20.

Its function is as follows. This protein binds to 23S rRNA in the presence of protein L20. The chain is Large ribosomal subunit protein bL21 from Maricaulis maris (strain MCS10) (Caulobacter maris).